The chain runs to 365 residues: tRNA/tmRNA (uracil-C(5))-methyltransferase (365 aa).

S-adenosyl-L-methionine-binding residues include Gln189, Tyr217, Asn222, Glu238, and Asp298. The active-site Nucleophile is the Cys323. Catalysis depends on Glu357, which acts as the Proton acceptor.

It belongs to the class I-like SAM-binding methyltransferase superfamily. RNA M5U methyltransferase family. TrmA subfamily.

The enzyme catalyses uridine(54) in tRNA + S-adenosyl-L-methionine = 5-methyluridine(54) in tRNA + S-adenosyl-L-homocysteine + H(+). It carries out the reaction uridine(341) in tmRNA + S-adenosyl-L-methionine = 5-methyluridine(341) in tmRNA + S-adenosyl-L-homocysteine + H(+). Its function is as follows. Dual-specificity methyltransferase that catalyzes the formation of 5-methyluridine at position 54 (m5U54) in all tRNAs, and that of position 341 (m5U341) in tmRNA (transfer-mRNA). This chain is tRNA/tmRNA (uracil-C(5))-methyltransferase, found in Shewanella loihica (strain ATCC BAA-1088 / PV-4).